A 637-amino-acid chain; its full sequence is Biosynthetic arginine decarboxylase (637 aa).

Lys101 carries the post-translational modification N6-(pyridoxal phosphate)lysine. A substrate-binding site is contributed by Phe286–Tyr296.

This sequence belongs to the Orn/Lys/Arg decarboxylase class-II family. SpeA subfamily. Requires Mg(2+) as cofactor. It depends on pyridoxal 5'-phosphate as a cofactor.

The catalysed reaction is L-arginine + H(+) = agmatine + CO2. The protein operates within amine and polyamine biosynthesis; agmatine biosynthesis; agmatine from L-arginine: step 1/1. Functionally, catalyzes the biosynthesis of agmatine from arginine. In Shewanella sp. (strain ANA-3), this protein is Biosynthetic arginine decarboxylase.